An 897-amino-acid polypeptide reads, in one-letter code: 3'-5' exonuclease DinG (897 aa).

In terms of domain architecture, Exonuclease spans 8 to 161 (VVDLETTGNQ…DEDAATTAKL (154 aa)). Residues 241 to 496 (SKAVDQLGLT…KAIDQLEKQR (256 aa)) enclose the Helicase ATP-binding domain. 276–283 (ASLGSGKS) contacts ATP. Residues 448–451 (DEAH) carry the DEAH box motif. The 191-residue stretch at 703–893 (NIDEYVASIV…QFGKLLRQIQ (191 aa)) folds into the Helicase C-terminal domain.

It belongs to the helicase family. DinG subfamily. Type 2 sub-subfamily.

In terms of biological role, 3'-5' exonuclease. The polypeptide is 3'-5' exonuclease DinG (Staphylococcus aureus (strain MSSA476)).